The chain runs to 76 residues: Exodeoxyribonuclease 7 small subunit (76 aa).

This sequence belongs to the XseB family. Heterooligomer composed of large and small subunits.

Its subcellular location is the cytoplasm. It carries out the reaction Exonucleolytic cleavage in either 5'- to 3'- or 3'- to 5'-direction to yield nucleoside 5'-phosphates.. Functionally, bidirectionally degrades single-stranded DNA into large acid-insoluble oligonucleotides, which are then degraded further into small acid-soluble oligonucleotides. The sequence is that of Exodeoxyribonuclease 7 small subunit from Staphylococcus haemolyticus (strain JCSC1435).